The primary structure comprises 449 residues: Exodeoxyribonuclease 7 large subunit (449 aa).

Belongs to the XseA family. Heterooligomer composed of large and small subunits.

It is found in the cytoplasm. It carries out the reaction Exonucleolytic cleavage in either 5'- to 3'- or 3'- to 5'-direction to yield nucleoside 5'-phosphates.. Functionally, bidirectionally degrades single-stranded DNA into large acid-insoluble oligonucleotides, which are then degraded further into small acid-soluble oligonucleotides. The chain is Exodeoxyribonuclease 7 large subunit from Salmonella paratyphi B (strain ATCC BAA-1250 / SPB7).